A 613-amino-acid polypeptide reads, in one-letter code: MGDYFAWDFANISGSNTSGSLNLNQLNLDNINNGLHNQEDGAGGRNENSERVGSGSPGSVSMQVLSLFSAVNSALATLEKSEEFPSVVKDEQSIFPAVAKASNSLDELAQNIIPAPSPPGFNRKRKTFDEDSSVEMIRRAISDHLDLLNNCCIGIANLNEDSVHKISLTRSGKPSQLVTVSCRHSSVIQKSYGSEKRYLCPPPMVYINGNYSSIFNQSFRTEISIMNDFGQCSQPISEEYTGQGCMIFRSLHISSLVAAKSKNLRLSLDMFSNVNNQLLSHLVTSSISIVSKPSKKGSKLKISNITLRSGSVVSLYNRINSQTVRTKYTSIEAGQFCLRGDRWVPLRINLLLPDENGKLKVCDDVDNPEPIKYGSIVELVDEATGTTSDPLIIRRVEKDHIAEEDGYVNQMHRIVLESAYPISNVRHLKIAEHSSLAYSNNISVRWFLGATSAQNRNASSEAILPIEWEAVGNLSSNEMTRVGDSVCWTIVGISHFDCTMMLPFNQNPVPTVTDYPYIEEPPEYLESSRSLQFKIGGYSVGLQIWLGVHGPLSYSFTAAADTSTMGTVTLGLSQISYDPSCAEQKYPLLFVIPGGIVIIGKCEILLTSSAFGN.

Residues 32-58 are disordered; that stretch reads NNGLHNQEDGAGGRNENSERVGSGSPG.

It belongs to the Su(H) family.

Its subcellular location is the cytoplasm. It is found in the nucleus. Transcription factor that behaves as a negative regulator of adhesion. Recognizes specifically the canonical CSL response element GTGA/GGAA. May also play a cbf12-antagonistic role in the regulation of a number of other important processes such as extracellular material production, colony morphogenesis, ploidy maintenance, or meiosis. The sequence is that of Transcription factor cbf11 (cbf11) from Schizosaccharomyces pombe (strain 972 / ATCC 24843) (Fission yeast).